The following is a 395-amino-acid chain: LIM/homeobox protein Lhx3 (395 aa).

2 LIM zinc-binding domains span residues 28 to 78 and 87 to 141; these read CAGC…CKED and CAAC…CKAD. Positions 154 to 213 form a DNA-binding region, homeobox; sequence AKRPRTTITAKQLETLKNAYNNSPKPARHVREQLSSETGLDMRVVQVWFQNRRAKEKRLK. 2 disordered regions span residues 209-325 and 348-395; these read EKRL…LQAL and GGQG…HAQF. Residues 257–276 show a composition bias toward polar residues; the sequence is DEPSMSEMSHSNGIYSNLSE.

It localises to the nucleus. Its function is as follows. Transcription factor. Defines subclasses of motoneurons that segregate into columns in the spinal cord and select distinct axon pathways. Acts in conjunction with LIM-1, ISL-1 and ISL-2. The protein is LIM/homeobox protein Lhx3 (LHX3) of Gallus gallus (Chicken).